A 201-amino-acid polypeptide reads, in one-letter code: Respiratory growth induced protein 1 (201 aa).

Residues 1 to 45 (MAGKKKSKSEALPLDLDNIKPMDHLQPVPKTRSSSITSIESADEP) are disordered. Polar residues predominate over residues 31–40 (TRSSSITSIE).

It belongs to the RGI1 family.

The protein resides in the cell membrane. Functionally, involved in the control of energetic metabolism and significantly contribute to cell fitness, especially under respiratory growth conditions. The protein is Respiratory growth induced protein 1 (RGI1) of Candida albicans (strain SC5314 / ATCC MYA-2876) (Yeast).